Consider the following 1404-residue polypeptide: DNA-directed RNA polymerase subunit beta' (1404 aa).

Zn(2+)-binding residues include C72, C74, C87, and C90. The Mg(2+) site is built by D463, D465, and D467. Zn(2+) is bound by residues C811, C885, C892, and C895.

The protein belongs to the RNA polymerase beta' chain family. In terms of assembly, the RNAP catalytic core consists of 2 alpha, 1 beta, 1 beta' and 1 omega subunit. When a sigma factor is associated with the core the holoenzyme is formed, which can initiate transcription. Mg(2+) is required as a cofactor. It depends on Zn(2+) as a cofactor.

It catalyses the reaction RNA(n) + a ribonucleoside 5'-triphosphate = RNA(n+1) + diphosphate. DNA-dependent RNA polymerase catalyzes the transcription of DNA into RNA using the four ribonucleoside triphosphates as substrates. The chain is DNA-directed RNA polymerase subunit beta' from Jannaschia sp. (strain CCS1).